Here is a 422-residue protein sequence, read N- to C-terminus: Acyl-[acyl-carrier-protein] desaturase 6, chloroplastic (422 aa).

Residues 1 to 46 constitute a chloroplast transit peptide; it reads MAATATMAMPLANRLRCKPNTNSSSPSRTLFGRRVTMISSSRWMCR. Residues Glu154, Glu192, His195, Glu245, Glu280, and His283 each coordinate Fe cation.

The protein belongs to the fatty acid desaturase type 2 family. In terms of assembly, homodimer. Fe(2+) is required as a cofactor.

It localises to the plastid. The protein resides in the chloroplast. The protein operates within lipid metabolism; fatty acid metabolism. In terms of biological role, introduces a cis double bond in the acyl chain of an acyl-[acyl-carrier protein]. The sequence is that of Acyl-[acyl-carrier-protein] desaturase 6, chloroplastic from Oryza sativa subsp. indica (Rice).